Reading from the N-terminus, the 123-residue chain is ATP synthase epsilon chain (123 aa).

Belongs to the ATPase epsilon chain family. F-type ATPases have 2 components, CF(1) - the catalytic core - and CF(0) - the membrane proton channel. CF(1) has five subunits: alpha(3), beta(3), gamma(1), delta(1), epsilon(1). CF(0) has three main subunits: a, b and c.

The protein resides in the cell membrane. In terms of biological role, produces ATP from ADP in the presence of a proton gradient across the membrane. The polypeptide is ATP synthase epsilon chain (Corynebacterium diphtheriae (strain ATCC 700971 / NCTC 13129 / Biotype gravis)).